Reading from the N-terminus, the 237-residue chain is Ribonuclease PH (237 aa).

Residues R86 and 124–126 (GTR) contribute to the phosphate site.

This sequence belongs to the RNase PH family. In terms of assembly, homohexameric ring arranged as a trimer of dimers.

The enzyme catalyses tRNA(n+1) + phosphate = tRNA(n) + a ribonucleoside 5'-diphosphate. Its function is as follows. Phosphorolytic 3'-5' exoribonuclease that plays an important role in tRNA 3'-end maturation. Removes nucleotide residues following the 3'-CCA terminus of tRNAs; can also add nucleotides to the ends of RNA molecules by using nucleoside diphosphates as substrates, but this may not be physiologically important. Probably plays a role in initiation of 16S rRNA degradation (leading to ribosome degradation) during starvation. The polypeptide is Ribonuclease PH (Shewanella baltica (strain OS223)).